Consider the following 362-residue polypeptide: 3-isopropylmalate dehydrogenase (362 aa).

Residue 76-87 coordinates NAD(+); the sequence is GPKWGTGSVRPE. Residues R94, R104, R133, and D222 each coordinate substrate. The Mg(2+) site is built by D222, D247, and D251. Residue 286 to 297 coordinates NAD(+); it reads GSAPDLGPGKVN.

Belongs to the isocitrate and isopropylmalate dehydrogenases family. Homodimer. It depends on Mg(2+) as a cofactor. Mn(2+) is required as a cofactor.

It is found in the cytoplasm. The enzyme catalyses (2R,3S)-3-isopropylmalate + NAD(+) = 4-methyl-2-oxopentanoate + CO2 + NADH. It participates in amino-acid biosynthesis; L-leucine biosynthesis; L-leucine from 3-methyl-2-oxobutanoate: step 3/4. Functionally, catalyzes the oxidation of 3-carboxy-2-hydroxy-4-methylpentanoate (3-isopropylmalate) to 3-carboxy-4-methyl-2-oxopentanoate. The product decarboxylates to 4-methyl-2 oxopentanoate. The polypeptide is 3-isopropylmalate dehydrogenase (LEU2) (Pichia angusta (Yeast)).